The sequence spans 251 residues: Probable transcriptional regulatory protein Pmob_0807 (251 aa).

The segment at 1–22 (MSGHNKWANIKHRKGAQDAKRS) is disordered.

Belongs to the TACO1 family.

The protein resides in the cytoplasm. The polypeptide is Probable transcriptional regulatory protein Pmob_0807 (Petrotoga mobilis (strain DSM 10674 / SJ95)).